Reading from the N-terminus, the 259-residue chain is ATP synthase subunit b 3 (259 aa).

A helical transmembrane segment spans residues 5–27; the sequence is WWTLGLQAINVLILIWILSRFLF.

Belongs to the ATPase B chain family. In terms of assembly, F-type ATPases have 2 components, F(1) - the catalytic core - and F(0) - the membrane proton channel. F(1) has five subunits: alpha(3), beta(3), gamma(1), delta(1), epsilon(1). F(0) has three main subunits: a(1), b(2) and c(10-14). The alpha and beta chains form an alternating ring which encloses part of the gamma chain. F(1) is attached to F(0) by a central stalk formed by the gamma and epsilon chains, while a peripheral stalk is formed by the delta and b chains.

The protein localises to the cell inner membrane. In terms of biological role, f(1)F(0) ATP synthase produces ATP from ADP in the presence of a proton or sodium gradient. F-type ATPases consist of two structural domains, F(1) containing the extramembraneous catalytic core and F(0) containing the membrane proton channel, linked together by a central stalk and a peripheral stalk. During catalysis, ATP synthesis in the catalytic domain of F(1) is coupled via a rotary mechanism of the central stalk subunits to proton translocation. Its function is as follows. Component of the F(0) channel, it forms part of the peripheral stalk, linking F(1) to F(0). This Beijerinckia indica subsp. indica (strain ATCC 9039 / DSM 1715 / NCIMB 8712) protein is ATP synthase subunit b 3.